The chain runs to 346 residues: Methylthioribose-1-phosphate isomerase (346 aa).

Residues 47–49 (RGA), Arg88, and Gln195 contribute to the substrate site. Asp236 serves as the catalytic Proton donor. 246–247 (NK) serves as a coordination point for substrate.

It belongs to the eIF-2B alpha/beta/delta subunits family. MtnA subfamily.

It catalyses the reaction 5-(methylsulfanyl)-alpha-D-ribose 1-phosphate = 5-(methylsulfanyl)-D-ribulose 1-phosphate. The protein operates within amino-acid biosynthesis; L-methionine biosynthesis via salvage pathway; L-methionine from S-methyl-5-thio-alpha-D-ribose 1-phosphate: step 1/6. Catalyzes the interconversion of methylthioribose-1-phosphate (MTR-1-P) into methylthioribulose-1-phosphate (MTRu-1-P). The chain is Methylthioribose-1-phosphate isomerase from Maridesulfovibrio salexigens (strain ATCC 14822 / DSM 2638 / NCIMB 8403 / VKM B-1763) (Desulfovibrio salexigens).